The sequence spans 263 residues: Thiamine thiazole synthase (263 aa).

Residues Ser-43, 62 to 63, Gly-70, Val-134, and 160 to 162 contribute to the NAD(+) site; these read ER and HID. Positions 162 and 177 each coordinate Fe cation. Residues Ser-180 and Met-227 each contribute to the NAD(+) site. Arg-237 provides a ligand contact to glycine.

It belongs to the THI4 family. Homooctamer; tetramer of dimers. It depends on Fe(2+) as a cofactor.

It carries out the reaction hydrogen sulfide + glycine + NAD(+) = ADP-5-ethyl-4-methylthiazole-2-carboxylate + nicotinamide + 3 H2O + H(+). Its pathway is cofactor biosynthesis; thiamine diphosphate biosynthesis. Its function is as follows. Involved in the biosynthesis of the thiazole moiety of thiamine. Catalyzes the conversion of NAD and glycine to adenosine diphosphate 5-(2-hydroxyethyl)-4-methylthiazole-2-carboxylate (ADT), an adenylated thiazole intermediate, using free sulfide as a source of sulfur. The polypeptide is Thiamine thiazole synthase (Methanococcus aeolicus (strain ATCC BAA-1280 / DSM 17508 / OCM 812 / Nankai-3)).